The chain runs to 545 residues: ATP synthase subunit alpha (545 aa).

Residue 173–180 coordinates ATP; the sequence is GDRQTGKT.

It belongs to the ATPase alpha/beta chains family. As to quaternary structure, F-type ATPases have 2 components, CF(1) - the catalytic core - and CF(0) - the membrane proton channel. CF(1) has five subunits: alpha(3), beta(3), gamma(1), delta(1), epsilon(1). CF(0) has three main subunits: a(1), b(2) and c(9-12). The alpha and beta chains form an alternating ring which encloses part of the gamma chain. CF(1) is attached to CF(0) by a central stalk formed by the gamma and epsilon chains, while a peripheral stalk is formed by the delta and b chains.

The protein localises to the cell membrane. The catalysed reaction is ATP + H2O + 4 H(+)(in) = ADP + phosphate + 5 H(+)(out). In terms of biological role, produces ATP from ADP in the presence of a proton gradient across the membrane. The alpha chain is a regulatory subunit. This Clavibacter sepedonicus (Clavibacter michiganensis subsp. sepedonicus) protein is ATP synthase subunit alpha.